We begin with the raw amino-acid sequence, 546 residues long: Chaperonin GroEL (546 aa).

ATP-binding positions include Thr30 to Pro33, Lys51, Asp87 to Thr91, Gly415, Asn479 to Ala481, and Asp495. Residues Lys526–Phe546 form a disordered region. Residues Ala534–Phe546 are compositionally biased toward gly residues.

It belongs to the chaperonin (HSP60) family. Forms a cylinder of 14 subunits composed of two heptameric rings stacked back-to-back. Interacts with the co-chaperonin GroES.

It localises to the cytoplasm. The enzyme catalyses ATP + H2O + a folded polypeptide = ADP + phosphate + an unfolded polypeptide.. Together with its co-chaperonin GroES, plays an essential role in assisting protein folding. The GroEL-GroES system forms a nano-cage that allows encapsulation of the non-native substrate proteins and provides a physical environment optimized to promote and accelerate protein folding. This Xanthomonas campestris pv. campestris (strain 8004) protein is Chaperonin GroEL.